Here is a 75-residue protein sequence, read N- to C-terminus: Metallothionein-like protein 1 (75 aa).

Belongs to the metallothionein superfamily. Type 15 family.

Functionally, metallothioneins have a high content of cysteine residues that bind various heavy metals. The polypeptide is Metallothionein-like protein 1 (MT1B) (Trifolium repens (Creeping white clover)).